The sequence spans 509 residues: MDEFXXNSNKNRXWQQFFXYPLFFREDLXAIXHDHHLDRFGSSEPKEIXVXNFXSFLTVKRSIRRICKQNKSISLFGNSDSNKLIEYNKNFSFKSMLEGFTIVLEVSIAMRSKHFIKGMDGWNSLRSIHCIFPFMEDKLPHSNYISDIRVPYSIHPEILVRIFRRWIRDVPSLHLLRSILHEWKNSFSRENLEKVLITQRENTRFSLFLWNSYVYECESFLIPLIKRFFNSQSLLYGSFPDRTHFEKKIKDIVIFPLHKISTKKIWLLKDSFIHYVRYGERSLIALKGTHLQVKKCRYHLFHFWQYFFHLWFQPYRICSLELSKTSFSFLGFFIHVKMRPLVVRAKMLDDLFITDLITNELNPIAPIRSILFSLAKEKFCDISGWPISKLSWTSLSDDDIXDRFDRIWINLFHYYSGSINQDGLYHIKYILLLSCAKTLACKHKSTIRVVREQLGSELFTKSFSKEREFISSSFSKTRSQRERIWNSEISQRNPLXXLWQKMENKQIEN.

It belongs to the intron maturase 2 family. MatK subfamily.

It localises to the plastid. It is found in the chloroplast. In terms of biological role, usually encoded in the trnK tRNA gene intron. Probably assists in splicing its own and other chloroplast group II introns. The protein is Maturase K of Thujopsis dolabrata (Hiba arborvitae).